A 603-amino-acid polypeptide reads, in one-letter code: Sorting nexin-41 (603 aa).

Residues 1-36 (MNSFRESDEEDNNPFSGTNHLYASGIGAVPEGDDDF) form a disordered region. In terms of domain architecture, PX spans 121 to 241 (AEGSLGALRI…QKFLNPEYIW (121 aa)). Arginine 159, serine 161, lysine 185, and arginine 208 together coordinate a 1,2-diacyl-sn-glycero-3-phospho-(1D-myo-inositol-3-phosphate).

It belongs to the sorting nexin family.

The protein localises to the endosome membrane. Its subcellular location is the endomembrane system. In terms of biological role, may be required for cytoplasm to vacuole transport (Cvt) and pexophagy. The sequence is that of Sorting nexin-41 (SNX41) from Eremothecium gossypii (strain ATCC 10895 / CBS 109.51 / FGSC 9923 / NRRL Y-1056) (Yeast).